The primary structure comprises 222 residues: Chymotrypsin-1 (222 aa).

The region spanning 1 to 221 (IVGGKDAPVG…FVSWINANLK (221 aa)) is the Peptidase S1 domain. C26 and C42 are joined by a disulfide. Active-site charge relay system residues include H41 and D87. 2 disulfide bridges follow: C151–C164 and C174–C198. S178 (charge relay system) is an active-site residue.

It belongs to the peptidase S1 family.

Its subcellular location is the secreted. It localises to the extracellular space. The enzyme catalyses Preferential cleavage: Tyr-|-Xaa, Trp-|-Xaa, Phe-|-Xaa, Leu-|-Xaa.. The polypeptide is Chymotrypsin-1 (Solenopsis invicta (Red imported fire ant)).